The following is a 449-amino-acid chain: MHSQQRPNPQMNRHPYGTPGSAPQMRRPGGFAGQPPQMHGPRMVAPPAAPLPKKKKYADKCIHPKIRELEPDAENYMALLASEQKLDSTLSRKKLDIQEALKRPSKVKKRLRIYISHTFIEEKQPEKDTDEASLPMWELRVEGRLLDEQPPAPAIPGQRPVPKRKFSSFFKSLVIELDKEMYGPDQHLVEWHRTPQTNETDGFQVKRAGDRPVKCRILLLLDNHPAKFKLHPRLAKVLGIATETRPKIIEALWQYIKTHGLQDPQERDIINCDTFLSQCFGVNRMRFMEVPNKLHQLLQQTDPLEFNHIIQRPKEGQEQVSTCYDIDVEMEDPVKQFMHTFVHSPGLANDIQTLDQKCYDIIEQINELKTRRDFYARFYTEPAEFIKSWVMSQNSDLKTMNELSGDLEAERFAESYVRPETEEGVQRYMFQKVNQKRHELEQSLGVRSN.

The segment covering 1-11 (MHSQQRPNPQM) has biased composition (polar residues). The tract at residues 1-56 (MHSQQRPNPQMNRHPYGTPGSAPQMRRPGGFAGQPPQMHGPRMVAPPAAPLPKKKK) is disordered. In terms of domain architecture, SWIB/MDM2 spans 223–300 (NHPAKFKLHP…PNKLHQLLQQ (78 aa)).

The protein belongs to the SMARCD family. In terms of assembly, component of the multiprotein chromatin-remodeling complexes SWI/SNF: SWI/SNF-A (BAF), SWI/SNF-B (PBAF) and related complexes. The canonical complex contains a catalytic subunit swsn-4, core subunits swsn-1 and swsn-5, and accessory subunits swsn-3, swsn-6, phf-10, dpff-1, swsn-9 and either ham-3/swsn-2.1 or swsn-2.2.

The protein localises to the nucleus. Its subcellular location is the nucleoplasm. It is found in the chromosome. The protein resides in the nucleus envelope. Functionally, involved in transcriptional activation and repression of select genes by chromatin remodeling (alteration of DNA-nucleosome topology). Component of SWI/SNF chromatin remodeling complexes that carry out key enzymatic activities, changing chromatin structure by altering DNA-histone contacts within a nucleosome in an ATP-dependent manner. Probably regulates vulva development through the let-60/Ras pathway. Involved in nuclear reassembly after mitosis and recruitment of nuclear envelope protein, mel-28, to the nuclear periphery in the early embryo and in the adult germline. Involved in gonadogenesis. The protein is SWI/SNF chromatin-remodeling accessory subunit 2 of Caenorhabditis elegans.